We begin with the raw amino-acid sequence, 424 residues long: Gamma-glutamyl phosphate reductase (424 aa).

It belongs to the gamma-glutamyl phosphate reductase family.

It is found in the cytoplasm. It catalyses the reaction L-glutamate 5-semialdehyde + phosphate + NADP(+) = L-glutamyl 5-phosphate + NADPH + H(+). It participates in amino-acid biosynthesis; L-proline biosynthesis; L-glutamate 5-semialdehyde from L-glutamate: step 2/2. In terms of biological role, catalyzes the NADPH-dependent reduction of L-glutamate 5-phosphate into L-glutamate 5-semialdehyde and phosphate. The product spontaneously undergoes cyclization to form 1-pyrroline-5-carboxylate. The protein is Gamma-glutamyl phosphate reductase of Dehalococcoides mccartyi (strain ATCC BAA-2100 / JCM 16839 / KCTC 5957 / BAV1).